A 75-amino-acid chain; its full sequence is Protein Tlp homolog (75 aa).

A disordered region spans residues 52–75 (RREALDGMREEIKDEARDKKNGYM).

This sequence belongs to the Tlp family.

The sequence is that of Protein Tlp homolog from Clostridium botulinum (strain Okra / Type B1).